The sequence spans 511 residues: Glucans biosynthesis protein G (511 aa).

The first 22 residues, 1-22 (MMKMRWLSAAVMLTLYTSSSWA), serve as a signal peptide directing secretion.

It belongs to the OpgD/OpgG family.

It is found in the periplasm. The protein operates within glycan metabolism; osmoregulated periplasmic glucan (OPG) biosynthesis. Its function is as follows. Involved in the biosynthesis of osmoregulated periplasmic glucans (OPGs). This chain is Glucans biosynthesis protein G, found in Escherichia coli (strain K12 / MC4100 / BW2952).